The following is a 371-amino-acid chain: 3-isopropylmalate dehydrogenase (371 aa).

The residue at position 55 (T55) is a Phosphothreonine. 78–89 (GPEWTNPNCRPE) is a binding site for NAD(+). Residues R96, R106, R135, and D224 each coordinate substrate. Mg(2+) is bound by residues D224, D249, and D253. 290 to 302 (GSAPDIAGKGIVN) contacts NAD(+).

The protein belongs to the isocitrate and isopropylmalate dehydrogenases family. In terms of assembly, homodimer. Requires Mg(2+) as cofactor. Mn(2+) is required as a cofactor.

The protein localises to the cytoplasm. It carries out the reaction (2R,3S)-3-isopropylmalate + NAD(+) = 4-methyl-2-oxopentanoate + CO2 + NADH. It functions in the pathway amino-acid biosynthesis; L-leucine biosynthesis; L-leucine from 3-methyl-2-oxobutanoate: step 3/4. In terms of biological role, catalyzes the oxidation of 3-carboxy-2-hydroxy-4-methylpentanoate (3-isopropylmalate) to 3-carboxy-4-methyl-2-oxopentanoate. The product decarboxylates to 4-methyl-2 oxopentanoate. The protein is 3-isopropylmalate dehydrogenase (leu1) of Schizosaccharomyces pombe (strain 972 / ATCC 24843) (Fission yeast).